Here is a 365-residue protein sequence, read N- to C-terminus: Fucose-specific lectin (365 aa).

The N-terminal stretch at 1 to 21 is a signal peptide; that stretch reads MKLLHFTILLQVSLFPASSLA. A run of 6 repeats spans residues 22-79, 80-141, 142-206, 207-261, 262-309, and 310-365. The 6 X approximate tandem repeats stretch occupies residues 22–365; that stretch reads QAGGNNTEVQ…RRGILAIPPA (344 aa). A glycan (N-linked (GlcNAc...) asparagine) is linked at asparagine 26. Residues arginine 51, glutamate 63, and tryptophan 70 each contribute to the beta-L-fucose site. Asparagine 76 and asparagine 85 each carry an N-linked (GlcNAc...) asparagine glycan. Beta-L-fucose is bound at residue arginine 111. N-linked (GlcNAc...) asparagine glycosylation occurs at asparagine 118. Positions 123, 132, 164, 176, 201, and 231 each coordinate beta-L-fucose. An N-linked (GlcNAc...) asparagine glycan is attached at asparagine 248. Positions 283, 333, and 347 each coordinate beta-L-fucose.

The protein belongs to the fungal fucose-specific lectin family. Homodimer.

It localises to the secreted. Its function is as follows. Probable L-fucose-binding lectin. The polypeptide is Fucose-specific lectin (Arthroderma benhamiae (strain ATCC MYA-4681 / CBS 112371) (Trichophyton mentagrophytes)).